Consider the following 282-residue polypeptide: MQEIFLCSISNVRSGDCKEDCAYCTQSSHHQGAIKRYKFKDEKVVLQEARALRELGALGFCLVTSGRELDDEKCEYIAKLAKAINKEELGLHLIACCGRADLEQLEFLRDAGIHSYNHNLETSQNFFPKICTTHTWEERFITCENALRAGLGLCSGGIFGLNESWEDRIEMLRALASLSPHTTPINFFIKNPVLPIDAETLSADEALECVLLAKEFLPNARLMVAGGREVVFKDNDKQEAKLFEYGINAVVLGDYLTTKGKAPKKDIEKLLSYGLTMATSCH.

One can recognise a Radical SAM core domain in the interval 1–228 (MQEIFLCSIS…NARLMVAGGR (228 aa)). C17, C21, and C24 together coordinate [4Fe-4S] cluster. 4 residues coordinate [2Fe-2S] cluster: C61, C96, C154, and R221.

This sequence belongs to the radical SAM superfamily. Biotin synthase family. Homodimer. Requires [4Fe-4S] cluster as cofactor. [2Fe-2S] cluster is required as a cofactor.

The enzyme catalyses (4R,5S)-dethiobiotin + (sulfur carrier)-SH + 2 reduced [2Fe-2S]-[ferredoxin] + 2 S-adenosyl-L-methionine = (sulfur carrier)-H + biotin + 2 5'-deoxyadenosine + 2 L-methionine + 2 oxidized [2Fe-2S]-[ferredoxin]. It functions in the pathway cofactor biosynthesis; biotin biosynthesis; biotin from 7,8-diaminononanoate: step 2/2. In terms of biological role, catalyzes the conversion of dethiobiotin (DTB) to biotin by the insertion of a sulfur atom into dethiobiotin via a radical-based mechanism. The polypeptide is Biotin synthase (Helicobacter pylori (strain J99 / ATCC 700824) (Campylobacter pylori J99)).